Consider the following 134-residue polypeptide: Protein LctB (134 aa).

In Bacillus caldotenax, this protein is Protein LctB (lctB).